Consider the following 274-residue polypeptide: 4-diphosphocytidyl-2-C-methyl-D-erythritol kinase (274 aa).

Residue Lys-10 is part of the active site. ATP is bound at residue 101–111 (PTQAGLGGGSA). The active site involves Asp-143.

The protein belongs to the GHMP kinase family. IspE subfamily.

It catalyses the reaction 4-CDP-2-C-methyl-D-erythritol + ATP = 4-CDP-2-C-methyl-D-erythritol 2-phosphate + ADP + H(+). The protein operates within isoprenoid biosynthesis; isopentenyl diphosphate biosynthesis via DXP pathway; isopentenyl diphosphate from 1-deoxy-D-xylulose 5-phosphate: step 3/6. In terms of biological role, catalyzes the phosphorylation of the position 2 hydroxy group of 4-diphosphocytidyl-2C-methyl-D-erythritol. This is 4-diphosphocytidyl-2-C-methyl-D-erythritol kinase from Helicobacter pylori (strain J99 / ATCC 700824) (Campylobacter pylori J99).